The sequence spans 920 residues: Dynamin-2B (920 aa).

M1 is modified (N-acetylmethionine). Residues P35 to P303 enclose the Dynamin-type G domain. The interval G45–S52 is G1 motif. G45 to A53 serves as a coordination point for GTP. A G2 motif region spans residues A71–R73. The interval D143–G146 is G3 motif. The G4 motif stretch occupies residues S204–D207. S204–A210 is a binding site for GTP. Residues A238 to G241 form a G5 motif region. I246–A249 is a GTP binding site. Residues R507 to D522 are compositionally biased toward basic and acidic residues. 2 disordered regions span residues R507 to P577 and I632 to K657. Positions A523 to S545 are enriched in polar residues. Composition is skewed to basic and acidic residues over residues S548–P567 and E641–N652. The region spanning G579–Q703 is the PH domain. One can recognise a GED domain in the interval L737–A830. Positions Y747–K761 are important for homodimerization. Residues N788–S812 are a coiled coil. The interval R828–Y920 is disordered. Over residues S833–G849 the composition is skewed to polar residues.

The protein belongs to the TRAFAC class dynamin-like GTPase superfamily. Dynamin/Fzo/YdjA family. As to quaternary structure, interacts with DRP1A at the plasma membrane and in forming clathrin-coated vesicles (CCV). Ubiquitous. Preferentially expressed in siliques.

Its subcellular location is the cytoplasm. It is found in the cytoskeleton. The protein resides in the cytoplasmic vesicle. It localises to the clathrin-coated vesicle. The protein localises to the cell membrane. It catalyses the reaction GTP + H2O = GDP + phosphate + H(+). In terms of biological role, putative microtubule-associated force-producing protein, able to bind and hydrolyze GTP. Collaboratively with DRP1A, participates in clathrin-coated vesicle formation during endocytosis. With DRP1A and PIP5K3, required for the precise coordination of polar ARAC3/ROP6 and ARAC4/ROP2 placement and subsequent root hair positioning during planar polarity formation in root hair-forming cells. This is Dynamin-2B from Arabidopsis thaliana (Mouse-ear cress).